A 401-amino-acid polypeptide reads, in one-letter code: Putative F-box/FBD/LRR-repeat protein At3g23955 (401 aa).

Residues 56 to 102 (VPARFQLPDPLLTQILNHLPTEEAVKTSVLSTRWRTLWLWVHNLELS) enclose the F-box domain. LRR repeat units lie at residues 128–152 (IESL…AFVK) and 275–296 (MSSL…FLRS). The 53-residue stretch at 321 to 373 (IKRVSISSVPECLLSSLEFVEFKAPICGLAPEMMLVWYFLENSPTLKKLTLRL) folds into the FBD domain.

This is Putative F-box/FBD/LRR-repeat protein At3g23955 from Arabidopsis thaliana (Mouse-ear cress).